The following is a 616-amino-acid chain: uncharacterized protein (616 aa).

It belongs to the UbiD family.

This is an uncharacterized protein from Helicobacter pylori (strain J99 / ATCC 700824) (Campylobacter pylori J99).